Consider the following 145-residue polypeptide: D-aminoacyl-tRNA deacylase (145 aa).

The Gly-cisPro motif, important for rejection of L-amino acids signature appears at 137–138; sequence GP.

Belongs to the DTD family. As to quaternary structure, homodimer.

The protein resides in the cytoplasm. It catalyses the reaction glycyl-tRNA(Ala) + H2O = tRNA(Ala) + glycine + H(+). It carries out the reaction a D-aminoacyl-tRNA + H2O = a tRNA + a D-alpha-amino acid + H(+). An aminoacyl-tRNA editing enzyme that deacylates mischarged D-aminoacyl-tRNAs. Also deacylates mischarged glycyl-tRNA(Ala), protecting cells against glycine mischarging by AlaRS. Acts via tRNA-based rather than protein-based catalysis; rejects L-amino acids rather than detecting D-amino acids in the active site. By recycling D-aminoacyl-tRNA to D-amino acids and free tRNA molecules, this enzyme counteracts the toxicity associated with the formation of D-aminoacyl-tRNA entities in vivo and helps enforce protein L-homochirality. In Psychromonas ingrahamii (strain DSM 17664 / CCUG 51855 / 37), this protein is D-aminoacyl-tRNA deacylase.